Here is a 173-residue protein sequence, read N- to C-terminus: Cell division protein SepF (173 aa).

Residues 31–82 (FEDFDEPLDERPSRNRSPRDDSRNNAVTDSSDHSPSRNERRSPAPAPATADL) are disordered. Basic and acidic residues-rich tracts occupy residues 39–53 (DERP…DDSR) and 60–72 (SSDH…ERRS).

It belongs to the SepF family. As to quaternary structure, homodimer. Interacts with FtsZ.

The protein localises to the cytoplasm. Its function is as follows. Cell division protein that is part of the divisome complex and is recruited early to the Z-ring. Probably stimulates Z-ring formation, perhaps through the cross-linking of FtsZ protofilaments. Its function overlaps with FtsA. This is Cell division protein SepF from Thermobifida fusca (strain YX).